Here is a 359-residue protein sequence, read N- to C-terminus: DNA polymerase IV (359 aa).

The UmuC domain maps to 6–186 (IIHVDMDAFY…LPIEAFWGVG (181 aa)). Asp-10 and Asp-104 together coordinate Mg(2+). The active site involves Glu-105.

The protein belongs to the DNA polymerase type-Y family. In terms of assembly, monomer. Mg(2+) serves as cofactor.

Its subcellular location is the cytoplasm. The catalysed reaction is DNA(n) + a 2'-deoxyribonucleoside 5'-triphosphate = DNA(n+1) + diphosphate. Its function is as follows. Poorly processive, error-prone DNA polymerase involved in untargeted mutagenesis. Copies undamaged DNA at stalled replication forks, which arise in vivo from mismatched or misaligned primer ends. These misaligned primers can be extended by PolIV. Exhibits no 3'-5' exonuclease (proofreading) activity. May be involved in translesional synthesis, in conjunction with the beta clamp from PolIII. The protein is DNA polymerase IV of Akkermansia muciniphila (strain ATCC BAA-835 / DSM 22959 / JCM 33894 / BCRC 81048 / CCUG 64013 / CIP 107961 / Muc).